Here is a 336-residue protein sequence, read N- to C-terminus: Probable RNA methyltransferase Anae109_4379 (336 aa).

Glutamate 86 functions as the Proton acceptor in the catalytic mechanism. The Radical SAM core domain maps to 93 to 322 (FDTHHTVCLS…PIVRRYSGGQ (230 aa)). A disulfide bridge links cysteine 100 with cysteine 328. [4Fe-4S] cluster contacts are provided by cysteine 107, cysteine 111, and cysteine 114. Residues 154–155 (GE), serine 186, and 209–211 (SLN) contribute to the S-adenosyl-L-methionine site. Cysteine 328 acts as the S-methylcysteine intermediate in catalysis.

It belongs to the radical SAM superfamily. RlmN family. It depends on [4Fe-4S] cluster as a cofactor.

It localises to the cytoplasm. The chain is Probable RNA methyltransferase Anae109_4379 from Anaeromyxobacter sp. (strain Fw109-5).